The primary structure comprises 86 residues: MKSIVFVALFGLALLAVVCSASEDAHKELLKEVVRAMVVDKTDAVQAEERECRWYLGECSQDGDCCKHLQCHSNYEWCIWDGTFSK.

The N-terminal stretch at 1-21 is a signal peptide; that stretch reads MKSIVFVALFGLALLAVVCSA. The propeptide occupies 22–50; the sequence is SEDAHKELLKEVVRAMVVDKTDAVQAEER. 3 disulfide bridges follow: Cys52-Cys66, Cys59-Cys71, and Cys65-Cys78.

Belongs to the neurotoxin 10 (Hwtx-1) family. 17 (Hntx-9) subfamily. Expressed by the venom gland.

The protein localises to the secreted. Its function is as follows. Ion channel inhibitor. The chain is Omega-theraphotoxin-Hhn1d from Cyriopagopus hainanus (Chinese bird spider).